Consider the following 87-residue polypeptide: Small ribosomal subunit protein bS20 (87 aa).

Basic residues predominate over residues 1–12; that stretch reads MANHKSALKRNR. The interval 1–21 is disordered; sequence MANHKSALKRNRQAAVRNARN.

It belongs to the bacterial ribosomal protein bS20 family.

Functionally, binds directly to 16S ribosomal RNA. The protein is Small ribosomal subunit protein bS20 of Syntrophotalea carbinolica (strain DSM 2380 / NBRC 103641 / GraBd1) (Pelobacter carbinolicus).